Consider the following 145-residue polypeptide: D-aminoacyl-tRNA deacylase (145 aa).

The Gly-cisPro motif, important for rejection of L-amino acids signature appears at G137–P138.

It belongs to the DTD family. Homodimer.

The protein localises to the cytoplasm. It catalyses the reaction glycyl-tRNA(Ala) + H2O = tRNA(Ala) + glycine + H(+). The catalysed reaction is a D-aminoacyl-tRNA + H2O = a tRNA + a D-alpha-amino acid + H(+). Functionally, an aminoacyl-tRNA editing enzyme that deacylates mischarged D-aminoacyl-tRNAs. Also deacylates mischarged glycyl-tRNA(Ala), protecting cells against glycine mischarging by AlaRS. Acts via tRNA-based rather than protein-based catalysis; rejects L-amino acids rather than detecting D-amino acids in the active site. By recycling D-aminoacyl-tRNA to D-amino acids and free tRNA molecules, this enzyme counteracts the toxicity associated with the formation of D-aminoacyl-tRNA entities in vivo and helps enforce protein L-homochirality. The sequence is that of D-aminoacyl-tRNA deacylase from Chromohalobacter salexigens (strain ATCC BAA-138 / DSM 3043 / CIP 106854 / NCIMB 13768 / 1H11).